The following is a 409-amino-acid chain: Elongation factor Tu, chloroplastic (409 aa).

The 205-residue stretch at 10–214 (KPHVNIGTIG…TVDAYIPTPE (205 aa)) folds into the tr-type G domain. A G1 region spans residues 19–26 (GHVDHGKT). Position 19 to 26 (19 to 26 (GHVDHGKT)) interacts with GTP. Residue threonine 26 participates in Mg(2+) binding. The tract at residues 60–64 (GITIN) is G2. Residues 81–84 (DCPG) are G3. GTP is bound by residues 81–85 (DCPGH) and 136–139 (NKED). The interval 136 to 139 (NKED) is G4. Residues 174–176 (SAL) are G5.

It belongs to the TRAFAC class translation factor GTPase superfamily. Classic translation factor GTPase family. EF-Tu/EF-1A subfamily.

Its subcellular location is the plastid. It localises to the chloroplast. The catalysed reaction is GTP + H2O = GDP + phosphate + H(+). Its function is as follows. GTP hydrolase that promotes the GTP-dependent binding of aminoacyl-tRNA to the A-site of ribosomes during protein biosynthesis. This Pleurastrum terricola (Filamentous green alga) protein is Elongation factor Tu, chloroplastic (tufA).